The sequence spans 424 residues: Protein SamB (424 aa).

Residues 2–189 (FALADVNSFY…QPVEEIWGVG (188 aa)) enclose the UmuC domain.

The protein belongs to the DNA polymerase type-Y family.

Functionally, involved in UV protection and mutation. This Salmonella typhimurium protein is Protein SamB (samB).